Reading from the N-terminus, the 319-residue chain is Protease HtpX homolog (319 aa).

Transmembrane regions (helical) follow at residues 3–23 and 32–52; these read LTVL…AWAL and TGVA…QWLF. His-134 contacts Zn(2+). Residue Glu-135 is part of the active site. Residue His-138 coordinates Zn(2+). The next 2 helical transmembrane spans lie at 146–166 and 182–202; these read VILA…TLVW and MALV…QLIV. A Zn(2+)-binding site is contributed by Glu-210.

This sequence belongs to the peptidase M48B family. Zn(2+) is required as a cofactor.

It is found in the cell membrane. The polypeptide is Protease HtpX homolog (Aeropyrum pernix (strain ATCC 700893 / DSM 11879 / JCM 9820 / NBRC 100138 / K1)).